The primary structure comprises 163 residues: C-type lectin lectoxin-Lio1 (163 aa).

The signal sequence occupies residues 1–21; sequence MERFIFAALLVVALSLSGTGA. Disulfide bonds link C25-C36, C53-C152, and C127-C144. The C-type lectin domain occupies 32–153; that stretch reads SDGYCYKVFK…CRSKRYFICK (122 aa). Positions 117–119 match the Mannose-binding motif; the sequence is EPN. Ca(2+) contacts are provided by E125 and D141.

It belongs to the true venom lectin family. In terms of tissue distribution, expressed by the venom gland.

It is found in the secreted. Mannose-binding lectin which recognizes specific carbohydrate structures and agglutinates a variety of animal cells by binding to cell-surface glycoproteins and glycolipids. May be a calcium-dependent lectin. The protein is C-type lectin lectoxin-Lio1 of Erythrolamprus poecilogyrus (Water snake).